A 758-amino-acid chain; its full sequence is CRISPR system single-strand-specific deoxyribonuclease Cas10/Csm1 (subtype III-A) (758 aa).

Residues 1-82 (MKKEKIDLFY…TYIADNIASG (82 aa)) are HD domain. A GGDEF domain is found at 509 to 647 (KRLAVVRLDV…EKDSISLFSS (139 aa)).

It belongs to the CRISPR-associated Cas10/Csm1 family. In terms of assembly, part of the Csm effector complex that includes at least Cas10(1), Csm2(3), Csm3(5), Csm4(1), Csm5(1) and mature crRNA. The Csm complex is elongated and slightly twisted with a maximal length of 215 Angstroms and a diameter of 75-80 Angstroms. It has been modeled to have a central protein filamant of Csm3 subunits along which the dsRNA helix of paired crRNA and target RNA binds. The filament is capped at one end by Cas10 and Csm4 and at the other end by Csm5; ssDNA is thought to bind to the N-terminal HD domain of Cas10. Csm with a precursor crRNA does not include Csm5, while Cas6, the enzyme probably involved in pre-crRNA processing, is found associated with a subset of the Csm complex. Requires a divalent metal cation as cofactor.

It carries out the reaction 6 ATP = cyclic hexaadenylate + 6 diphosphate. With respect to regulation, ssDNase activity is activated by target RNA binding to the Csm-crRNA complex and is inhibited by EDTA. In terms of biological role, CRISPR (clustered regularly interspaced short palindromic repeat) is an adaptive immune system that provides protection against mobile genetic elements (viruses, transposable elements and conjugative plasmids). CRISPR clusters contain spacers, sequences complementary to antecedent mobile elements, and target invading nucleic acids. CRISPR clusters are transcribed and processed into CRISPR RNA (crRNA). The type III-A Csm effector complex binds crRNA and acts as a crRNA-guided RNase, DNase and cyclic oligoadenylate synthase; binding of target RNA cognate to the crRNA is required for all activities. In a heterologous host this Csm effector complex restricts ssRNA phage MS2, suggesting it may target RNA viruses in vivo. Csm functions as a non-specific ssDNase. Base-pairing between crRNA and target RNA to form a ternary Csm complex activates a ssDNase activity; target RNA cleavage suppresses the ssDNase, a temporal control that prevents uncontrolled DNA degradation. Viral RNA transcripts probably tether the Csm complex to the viral genome, recruiting Cas10 ssDNA activity which is able to degrade DNA in the transcription bubble, spatially controlling the DNase activity. Its function is as follows. This subunit has a weak ssDNase activity that is dramatically activated by the ternary Csm effector complex (the crRNA, Cas proteins and a cognate target ssRNA). Target RNA and ssDNA are cleaved simultaneously, although RNase activity (of Csm3) is much faster. RNA cleavage by Csm3 is not required for ssDNase activity as Csm complex with inactive Csm3 still has ssDNase activity; however as the cleaved target RNA products dissociate away ssDNase activity decreases. Self-recognition, with subsequent repression of the ssDNase activity, occurs when the 5' handle of the crRNA bases pairs with the 3' flanking sequence of the target RNA (which would occur if the CRISPR locus were transcribed as an anti-pre-crRNA). This protein has low activity on dsDNA which is not stimulated by the Csm complex. Functionally, this subunit is a single-strand-specific deoxyribonuclease (ssDNase) which digests both linear and circular ssDNA; it has both exo- and endonuclease activity. In terms of biological role, when associated with the ternary Csm effector complex (the crRNA, Cas proteins and a cognate target ssRNA) synthesizes cyclic oligoadenylates (cOA) from ATP, producing cyclic triadenylate (cA3) up to cyclic hexaadenylate (cA6), which is the active cOA. The enzyme is also able to cyclize pppA3 up to pppA6. cOAs are second messengers that induce an antiviral state important for defense against invading nucleic acids. Synthesis of cOA can occur with AMP plus ATP, 2'dATP or 3'dATP (but no other nucleotides), and requires a free 3'-OH ribose moiety. In Streptococcus thermophilus, this protein is CRISPR system single-strand-specific deoxyribonuclease Cas10/Csm1 (subtype III-A).